The chain runs to 304 residues: Cbb3-type cytochrome c oxidase subunit CcoP (304 aa).

Helical transmembrane passes span 11–31 (LYVAGITVVSLIFCLVVLIVA) and 61–81 (WWAGLFLVTIAFAVIYLALYP). Cytochrome c domains follow at residues 129–209 (QAMA…LSLS) and 216–296 (VAAQ…WSLS). Positions 142, 145, 146, 185, 228, 231, 232, and 273 each coordinate heme c.

This sequence belongs to the CcoP / FixP family. Component of the cbb3-type cytochrome c oxidase at least composed of CcoN, CcoO, CcoQ and CcoP. It depends on heme c as a cofactor.

It localises to the cell inner membrane. Its pathway is energy metabolism; oxidative phosphorylation. Its function is as follows. C-type cytochrome. Part of the cbb3-type cytochrome c oxidase complex. CcoP subunit is required for transferring electrons from donor cytochrome c via its heme groups to CcoO subunit. From there, electrons are shuttled to the catalytic binuclear center of CcoN subunit where oxygen reduction takes place. The complex also functions as a proton pump. The chain is Cbb3-type cytochrome c oxidase subunit CcoP from Rubrivivax gelatinosus (Rhodocyclus gelatinosus).